Reading from the N-terminus, the 880-residue chain is Alanine--tRNA ligase (880 aa).

Residues H566, H570, C668, and H672 each coordinate Zn(2+).

The protein belongs to the class-II aminoacyl-tRNA synthetase family. Zn(2+) serves as cofactor.

The protein resides in the cytoplasm. The catalysed reaction is tRNA(Ala) + L-alanine + ATP = L-alanyl-tRNA(Ala) + AMP + diphosphate. Functionally, catalyzes the attachment of alanine to tRNA(Ala) in a two-step reaction: alanine is first activated by ATP to form Ala-AMP and then transferred to the acceptor end of tRNA(Ala). Also edits incorrectly charged Ser-tRNA(Ala) and Gly-tRNA(Ala) via its editing domain. The sequence is that of Alanine--tRNA ligase from Nostoc punctiforme (strain ATCC 29133 / PCC 73102).